The primary structure comprises 87 residues: HssA/B-like protein 56 (87 aa).

The protein belongs to the hssA/B family.

This chain is HssA/B-like protein 56 (hssl56), found in Dictyostelium discoideum (Social amoeba).